A 263-amino-acid chain; its full sequence is Interleukin-33 (263 aa).

Over residues 1–17 (MKYSTTKIPPAKMNSSA) the composition is skewed to polar residues. The interval 1–28 (MKYSTTKIPPAKMNSSADKALVKSPKLR) is disordered. A homeodomain-like HTH domain region spans residues 1–65 (MKYSTTKIPP…CYFRKEITKR (65 aa)). The segment at 62 to 103 (ITKRYSPRTAEKCRKQCLVFTACHQQLNKDFTSDVPMLQKCF) is interaction with RELA.

It belongs to the IL-1 family. Highly divergent. Forms a 1:1:1 heterotrimeric complex with its primary high-affinity receptor IL1RL1 and the coreceptor IL1RAP. Interacts with cargo receptor TMED10; the interaction mediates the translocation from the cytoplasm into the ERGIC (endoplasmic reticulum-Golgi intermediate compartment) and thereby secretion. The full-length protein can be released from cells and is able to signal via the IL1RL1/ST2 receptor. However, proteolytic processing by CELA1, CSTG/cathepsin G and ELANE/neutrophil elastase produces C-terminal peptides that are more active than the unprocessed full-length protein. May also be proteolytically processed by calpains. Proteolytic cleavage mediated by apoptotic caspases including CASP3 and CASP7 results in IL33 inactivation. In vitro proteolytic cleavage by CASP1 was reported but could not be confirmed in vivo suggesting that IL33 is probably not a direct substrate for that caspase. In terms of tissue distribution, expressed in cultured umbilical artery smooth muscle cells after stimulation with IL1A and IL1B, and to a lesser extent with IFNG. Expressed in vasospastic cerebral arteries after subarachnoid hemorrhage.

Its subcellular location is the nucleus. It is found in the chromosome. It localises to the cytoplasm. The protein localises to the cytoplasmic vesicle. The protein resides in the secretory vesicle. Its subcellular location is the secreted. Its function is as follows. Cytokine that binds to and signals through the IL1RL1/ST2 receptor which in turn activates NF-kappa-B and MAPK signaling pathways in target cells. Involved in the maturation of Th2 cells inducing the secretion of T-helper type 2-associated cytokines. Also involved in activation of mast cells, basophils, eosinophils and natural killer cells. Acts as a chemoattractant for Th2 cells, and may function as an 'alarmin', that amplifies immune responses during tissue injury. Induces rapid UCP2-dependent mitochondrial rewiring that attenuates the generation of reactive oxygen species and preserves the integrity of Krebs cycle required for persistent production of itaconate and subsequent GATA3-dependent differentiation of inflammation-resolving alternatively activated macrophages. Functionally, in quiescent endothelia the uncleaved form is constitutively and abundantly expressed, and acts as a chromatin-associated nuclear factor with transcriptional repressor properties, it may sequester nuclear NF-kappaB/RELA, lowering expression of its targets. This form is rapidely lost upon angiogenic or pro-inflammatory activation. The chain is Interleukin-33 (IL33) from Canis lupus familiaris (Dog).